The chain runs to 185 residues: Gastrokine-1 (185 aa).

Residues 1-20 form the signal peptide; sequence MKFTIAFAGLLGVFLTPALA. The BRICHOS domain occupies 54-150; that stretch reads NNGWNSWNAL…MCKGIPTYMA (97 aa). Residues Cys81 and Cys142 are joined by a disulfide bond.

It belongs to the gastrokine family. In terms of tissue distribution, highly expressed specifically in surface cells of the antrum mucosa from where it is secreted.

It localises to the secreted. The protein localises to the cytoplasmic granule. The protein resides in the golgi apparatus. In terms of biological role, has mitogenic activity and may be involved in maintaining the integrity of the gastric mucosal epithelium. This is Gastrokine-1 (GKN1) from Sus scrofa (Pig).